The sequence spans 317 residues: L-lactate dehydrogenase (317 aa).

NAD(+)-binding positions include Val-16, Asp-37, Arg-42, Tyr-67, and Gly-81–Ala-82. Substrate-binding residues include Gln-84 and Arg-90. NAD(+) contacts are provided by residues Ser-103, Ala-120–Asn-122, and Ser-145. Asn-122–Asp-125 lines the substrate pocket. Residue Asp-150–Arg-153 participates in substrate binding. His-177 acts as the Proton acceptor in catalysis. Residue Tyr-221 is modified to Phosphotyrosine. Position 230 (Thr-230) interacts with substrate.

It belongs to the LDH/MDH superfamily. LDH family. As to quaternary structure, homotetramer.

It localises to the cytoplasm. The enzyme catalyses (S)-lactate + NAD(+) = pyruvate + NADH + H(+). It functions in the pathway fermentation; pyruvate fermentation to lactate; (S)-lactate from pyruvate: step 1/1. Catalyzes the conversion of lactate to pyruvate. This Limosilactobacillus fermentum (strain NBRC 3956 / LMG 18251) (Lactobacillus fermentum) protein is L-lactate dehydrogenase.